The primary structure comprises 190 residues: Syndecan-2-B (190 aa).

The first 22 residues, 1–22, serve as a signal peptide directing secretion; that stretch reads MRNVWLIVPFALLAAFSGETWA. Over 23–136 the chain is Extracellular; that stretch reads QADRDLYIDS…NLFHRTEVLA (114 aa). A disordered region spans residues 34 to 60; sequence ESSGNYPVDDDDYSSGSGSGIPAHDDD. O-linked (Xyl...) (glycosaminoglycan) serine glycans are attached at residues S36, S48, S50, and S52. Residues 137–157 form a helical membrane-spanning segment; sequence AVIAGGGIGFLFAVFLILLLV. The Cytoplasmic segment spans residues 158–190; the sequence is YRMRKKDEGSYDLGERKPSSAVYQKAPTKEFYA. A disordered region spans residues 167 to 190; sequence SYDLGERKPSSAVYQKAPTKEFYA.

This sequence belongs to the syndecan proteoglycan family. In terms of processing, O-glycosylated; contains both heparan sulfate and chondroitin sulfate.

The protein resides in the membrane. Functionally, cell surface proteoglycan. The chain is Syndecan-2-B (sdc2-b) from Xenopus laevis (African clawed frog).